The primary structure comprises 82 residues: MLPFVHEQIGTIIVNFFILTVVCAITLVVCLAILTAIRLCVQCASGVNTLLFVPAFYIYNTGRNAYFKFQENRPPFPPEDWV.

The Virion surface segment spans residues 1-16; it reads MLPFVHEQIGTIIVNF. A helical membrane pass occupies residues 17–37; sequence FILTVVCAITLVVCLAILTAI. Residues 38-78 lie on the Intravirion side of the membrane; that stretch reads RLCVQCASGVNTLLFVPAFYIYNTGRNAYFKFQENRPPFPP.

Belongs to the betacoronaviruses E protein family. In terms of assembly, homopentamer. Interacts with membrane protein M in the budding compartment of the host cell, which is located between endoplasmic reticulum and the Golgi complex. Interacts with Nucleoprotein.

It localises to the host Golgi apparatus membrane. In terms of biological role, plays a central role in virus morphogenesis and assembly. Acts as a viroporin and self-assembles in host membranes forming pentameric protein-lipid pores that allow ion transport. Also plays a role in the induction of apoptosis. The protein is Envelope small membrane protein of Tylonycteris pachypus (Lesser bamboo bat).